The primary structure comprises 368 residues: uncharacterized protein (368 aa).

An N-terminal signal peptide occupies residues 1–19 (MHVSMIIFVSIFSIKYIMA). N-linked (GlcNAc...) asparagine; by host glycans are attached at residues asparagine 99, asparagine 170, asparagine 266, and asparagine 295.

This is an uncharacterized protein from Ostreid herpesvirus 1 (isolate France) (OsHV-1).